A 329-amino-acid chain; its full sequence is IDS-like terpene synthase 1 (329 aa).

D79 and D83 together coordinate Mg(2+).

It belongs to the FPP/GGPP synthase family. It depends on Mg(2+) as a cofactor.

The enzyme catalyses (2E)-geranyl diphosphate + H2O = linalool + diphosphate. The catalysed reaction is (2E,6E)-farnesyl diphosphate + H2O = (6E)-nerolidol + diphosphate. Terpene synthase that shows monoterpene synthase activity and produces linalool, using geranyl diphosphate (GPP) as substrate. Also shows sesquiterpene synthase activity as it is able to convert farnesyl diphosphate (FPP) into (E)-nerolidol. The protein is IDS-like terpene synthase 1 of Melampsora lini (Rust fungus).